The following is a 108-amino-acid chain: UPF0145 protein Tery_3795 (108 aa).

This sequence belongs to the UPF0145 family.

The protein is UPF0145 protein Tery_3795 of Trichodesmium erythraeum (strain IMS101).